The sequence spans 338 residues: tRNA-specific 2-thiouridylase MnmA (338 aa).

Residues 6–13 and Met-32 contribute to the ATP site; that span reads AMSGGVDS. Cys-92 (nucleophile) is an active-site residue. Cysteines 92 and 186 form a disulfide. Gly-116 serves as a coordination point for ATP. The segment at 134–136 is interaction with tRNA; it reads KDQ. The active-site Cysteine persulfide intermediate is Cys-186. The interaction with tRNA stretch occupies residues 288-289; the sequence is RY.

It belongs to the MnmA/TRMU family.

It localises to the cytoplasm. It catalyses the reaction S-sulfanyl-L-cysteinyl-[protein] + uridine(34) in tRNA + AH2 + ATP = 2-thiouridine(34) in tRNA + L-cysteinyl-[protein] + A + AMP + diphosphate + H(+). In terms of biological role, catalyzes the 2-thiolation of uridine at the wobble position (U34) of tRNA, leading to the formation of s(2)U34. This is tRNA-specific 2-thiouridylase MnmA from Campylobacter jejuni subsp. jejuni serotype O:6 (strain 81116 / NCTC 11828).